Here is a 197-residue protein sequence, read N- to C-terminus: MKDLTAKQRSVLIFIEEFIEKNGYPPSVREIARRFRITPRGAQLHLVALEKKGYIERKNGKPRAMRVTKSVKNRVPLIGEIRAGEKKEAIEYLEDYIEVPGSFLSSGYEHFLLRVKGESMIEEHICDGDLVLIRRQDWAQNGDIVAAMVEGEVTLKKFFQRGEMVELRPANKEMSPMFFRADRVKILGKVVGVFRKI.

The segment at residues 28–47 (VREIARRFRITPRGAQLHLV) is a DNA-binding region (H-T-H motif). Active-site for autocatalytic cleavage activity residues include S119 and K156.

This sequence belongs to the peptidase S24 family. Homodimer.

It catalyses the reaction Hydrolysis of Ala-|-Gly bond in repressor LexA.. Its function is as follows. Represses a number of genes involved in the response to DNA damage (SOS response), including recA and lexA. In the presence of single-stranded DNA, RecA interacts with LexA causing an autocatalytic cleavage which disrupts the DNA-binding part of LexA, leading to derepression of the SOS regulon and eventually DNA repair. The sequence is that of LexA repressor from Thermotoga neapolitana.